The following is a 348-amino-acid chain: Dual-specificity RNA methyltransferase RlmN (348 aa).

Catalysis depends on Glu-94, which acts as the Proton acceptor. Positions 100 to 330 (GKHNWTACIS…TAIIRASRGR (231 aa)) constitute a Radical SAM core domain. A disulfide bridge connects residues Cys-107 and Cys-336. [4Fe-4S] cluster contacts are provided by Cys-114, Cys-118, and Cys-121. S-adenosyl-L-methionine is bound by residues 163 to 164 (GE), Ser-195, 217 to 219 (SLN), and Asn-293. Cys-336 acts as the S-methylcysteine intermediate in catalysis.

The protein belongs to the radical SAM superfamily. RlmN family. [4Fe-4S] cluster is required as a cofactor.

The protein localises to the cytoplasm. It carries out the reaction adenosine(2503) in 23S rRNA + 2 reduced [2Fe-2S]-[ferredoxin] + 2 S-adenosyl-L-methionine = 2-methyladenosine(2503) in 23S rRNA + 5'-deoxyadenosine + L-methionine + 2 oxidized [2Fe-2S]-[ferredoxin] + S-adenosyl-L-homocysteine. The catalysed reaction is adenosine(37) in tRNA + 2 reduced [2Fe-2S]-[ferredoxin] + 2 S-adenosyl-L-methionine = 2-methyladenosine(37) in tRNA + 5'-deoxyadenosine + L-methionine + 2 oxidized [2Fe-2S]-[ferredoxin] + S-adenosyl-L-homocysteine. Its function is as follows. Specifically methylates position 2 of adenine 2503 in 23S rRNA and position 2 of adenine 37 in tRNAs. m2A2503 modification seems to play a crucial role in the proofreading step occurring at the peptidyl transferase center and thus would serve to optimize ribosomal fidelity. The chain is Dual-specificity RNA methyltransferase RlmN from Syntrophus aciditrophicus (strain SB).